The primary structure comprises 411 residues: UPF0261 protein SACE_5696 (411 aa).

The protein belongs to the UPF0261 family.

This is UPF0261 protein SACE_5696 from Saccharopolyspora erythraea (strain ATCC 11635 / DSM 40517 / JCM 4748 / NBRC 13426 / NCIMB 8594 / NRRL 2338).